The chain runs to 487 residues: Cytochrome c-552 (487 aa).

The N-terminal stretch at 1–27 is a signal peptide; sequence MSKKWTRNTAAMAAILSALCLSTNALA. His104 is a binding site for heme c. Residues Cys132, Cys135, and Lys136 each contribute to the heme site. Positions 170, 173, 174, 219, 222, and 223 each coordinate heme c. 4 residues coordinate Ca(2+): Glu225, Tyr226, Lys271, and Gln273. Tyr226 lines the substrate pocket. His274 lines the substrate pocket. The heme c site is built by His285, Cys292, Cys295, His296, His311, Cys324, Cys327, His328, and His403.

It belongs to the cytochrome c-552 family. The cofactor is Ca(2+). Heme c serves as cofactor.

It localises to the periplasm. It carries out the reaction 6 Fe(III)-[cytochrome c] + NH4(+) + 2 H2O = 6 Fe(II)-[cytochrome c] + nitrite + 8 H(+). It participates in nitrogen metabolism; nitrate reduction (assimilation). Catalyzes the reduction of nitrite to ammonia, consuming six electrons in the process. This chain is Cytochrome c-552, found in Photobacterium profundum (strain SS9).